A 249-amino-acid chain; its full sequence is Small ribosomal subunit protein eS6 (249 aa).

A compositionally biased stretch (basic and acidic residues) spans 216–229 (RMKEAKEKRQEQIA). The segment at 216–249 (RMKEAKEKRQEQIAKRRRLSSLRASTSKSESSQK) is disordered. A phosphoserine mark is found at S235, S236, S240, S244, and S247. A compositionally biased stretch (low complexity) spans 236 to 249 (SLRASTSKSESSQK).

Belongs to the eukaryotic ribosomal protein eS6 family. As to quaternary structure, component of the small ribosomal subunit. Ribosomal protein S6 is the major substrate of protein kinases in eukaryote ribosomes. The phosphorylation is stimulated by growth factors, tumor promoting agents, and mitogens. It is dephosphorylated at growth arrest.

The protein localises to the cytoplasm. In terms of biological role, component of the 40S small ribosomal subunit. Plays an important role in controlling cell growth and proliferation through the selective translation of particular classes of mRNA. The sequence is that of Small ribosomal subunit protein eS6 (rps6) from Oncorhynchus mykiss (Rainbow trout).